The primary structure comprises 1024 residues: Beta-galactosidase (1024 aa).

Substrate contacts are provided by Asn103 and Asp202. Asp202 is a Na(+) binding site. Residues Glu417, His419, and Glu462 each coordinate Mg(2+). Residues Glu462 and 538–541 (EYAH) contribute to the substrate site. Glu462 acts as the Proton donor in catalysis. Glu538 acts as the Nucleophile in catalysis. A Mg(2+)-binding site is contributed by Asn598. Na(+) is bound by residues Phe602 and Asn605. Substrate-binding residues include Asn605 and Trp1000.

The protein belongs to the glycosyl hydrolase 2 family. In terms of assembly, homotetramer. Requires Mg(2+) as cofactor. The cofactor is Na(+).

It catalyses the reaction Hydrolysis of terminal non-reducing beta-D-galactose residues in beta-D-galactosides.. This is Beta-galactosidase from Shigella sonnei (strain Ss046).